The primary structure comprises 187 residues: uncharacterized protein (187 aa).

Gly-2 carries N-myristoyl glycine; by host lipidation.

The protein belongs to the mimivirus L332/L333/L334 family.

This is an uncharacterized protein from Acanthamoeba polyphaga (Amoeba).